Reading from the N-terminus, the 114-residue chain is Class I hydrophobin 1 (114 aa).

A signal peptide spans 1-20 (MQFTKMSAFATLALATLAAA). 4 disulfide bridges follow: cysteine 33-cysteine 93, cysteine 40-cysteine 87, cysteine 41-cysteine 74, and cysteine 94-cysteine 107.

This sequence belongs to the fungal hydrophobin family. Self-assembles to form functional amyloid fibrils called rodlets. Self-assembly into fibrillar rodlets occurs spontaneously at hydrophobic:hydrophilic interfaces and the rodlets further associate laterally to form amphipathic monolayers.

It localises to the secreted. Its subcellular location is the cell wall. Aerial growth, conidiation, and dispersal of filamentous fungi in the environment rely upon a capability of their secreting small amphipathic proteins called hydrophobins (HPBs) with low sequence identity. Class I can self-assemble into an outermost layer of rodlet bundles on aerial cell surfaces, conferring cellular hydrophobicity that supports fungal growth, development and dispersal; whereas Class II form highly ordered films at water-air interfaces through intermolecular interactions but contribute nothing to the rodlet structure. Pnh1 is a class I hydrophobin that might be involved in the attachment of the hydrophilic wall of hyphae to the hydrophobic surface of wood under inorganic phosphate (Pi)-deficient conditions and enable the mycelium to degrade efficiently the components of wood and to acquire nutrients containing Pi. This chain is Class I hydrophobin 1, found in Pholiota nameko.